Consider the following 504-residue polypeptide: Transcription factor NDT80 (504 aa).

Disordered stretches follow at residues 64-172 (MHFN…QHHM), 283-310 (NGFP…NQHA), and 477-504 (RGRS…TPPQ). Composition is skewed to low complexity over residues 73 to 87 (QQQQ…QQQQ), 103 to 145 (QGPT…ARQP), 153 to 172 (QQAQ…QHHM), and 292 to 301 (HPQNQPQNHP). A DNA-binding region (NDT80) is located at residues 160–488 (QADAQSQAQQ…RSPSSYHKDR (329 aa)).

The protein resides in the nucleus. Its function is as follows. Meiosis-specific transcription factor that binds to the middle sporulation element (MSE) of targeted genes corresponding to the consensus sequence 5'-ACACAAA-3'. Acts as an activator of CDR1 induction by antifungal drugs. Modulates azole sensitivity by controlling the expression of ergosterol biosynthesis genes. Required for hyphal growth in response to different filament-inducing cues and for the proper expression of genes characterizing the filamentous transcriptional program including noteworthy genes encoding cell wall components, such as HWP1, ECE1, RBT4, and ALS3. Is essential for the completion of cell separation through the direct transcriptional regulation of genes encoding the chitinase CHT3 and the cell wall glucosidase SUN41. Required for biofilm formation and plays a key role in microcolony formation under both flow and static conditions and to epithelial surfaces. Essential for virulence. This chain is Transcription factor NDT80, found in Candida albicans (strain SC5314 / ATCC MYA-2876) (Yeast).